Reading from the N-terminus, the 618-residue chain is COMPASS component cclA (618 aa).

The disordered stretch occupies residues 1-91 (MSSIQPVGSS…KKAAVAPNSA (91 aa)). Low complexity-rich tracts occupy residues 8 to 19 (GSSGPSSNINSP) and 37 to 49 (NARS…SNAS). A compositionally biased stretch (basic residues) spans 57–69 (SKRNKRDSRKKRE). The 212-residue stretch at 157 to 368 (IADPGFPHIK…QSNVFSTKHL (212 aa)) folds into the B30.2/SPRY domain. A disordered region spans residues 588-618 (TLSVGHEGSPNPATPSAPLENTVPTEDVEMS).

The protein belongs to the cclA family. Component of the COMPASS complex.

The protein localises to the nucleus. It localises to the chromosome. Its subcellular location is the telomere. Its function is as follows. Component of the COMPASS (Set1C) complex that specifically mono-, di- and trimethylates histone H3 to form H3K4me1/2/3, which subsequently plays a role in telomere length maintenance and transcription elongation regulation. Controls the production of several secondary metabolites, including gliotoxin, but does not contribute to pathogenicity. In Aspergillus fumigatus (strain ATCC MYA-4609 / CBS 101355 / FGSC A1100 / Af293) (Neosartorya fumigata), this protein is COMPASS component cclA.